The primary structure comprises 63 residues: Odorranain-B1 (63 aa).

The N-terminal stretch at 1–22 (MFTTKKPLLLLFFLGIISLSVC) is a signal peptide. A propeptide spanning residues 23–41 (EQERDADEEDGGEVTEEEV) is cleaved from the precursor.

This sequence belongs to the frog skin active peptide (FSAP) family. Brevinin subfamily. Expressed by the skin glands.

It localises to the secreted. The polypeptide is Odorranain-B1 (Odorrana hainanensis (Odor frog)).